A 243-amino-acid chain; its full sequence is Triosephosphate isomerase (243 aa).

Residue 9 to 11 (NWK) participates in substrate binding. The active-site Electrophile is His-96. The active-site Proton acceptor is Glu-165. Residues Gly-171, Ser-204, and 225–226 (GG) each bind substrate.

Belongs to the triosephosphate isomerase family. Homodimer.

Its subcellular location is the cytoplasm. It carries out the reaction D-glyceraldehyde 3-phosphate = dihydroxyacetone phosphate. The protein operates within carbohydrate biosynthesis; gluconeogenesis. Its pathway is carbohydrate degradation; glycolysis; D-glyceraldehyde 3-phosphate from glycerone phosphate: step 1/1. Involved in the gluconeogenesis. Catalyzes stereospecifically the conversion of dihydroxyacetone phosphate (DHAP) to D-glyceraldehyde-3-phosphate (G3P). The chain is Triosephosphate isomerase from Synechococcus sp. (strain CC9902).